A 192-amino-acid polypeptide reads, in one-letter code: Probable thymidylate kinase (192 aa).

8-15 (GIDGSGKS) contacts ATP.

Belongs to the thymidylate kinase family.

The enzyme catalyses dTMP + ATP = dTDP + ADP. This chain is Probable thymidylate kinase, found in Pyrobaculum aerophilum (strain ATCC 51768 / DSM 7523 / JCM 9630 / CIP 104966 / NBRC 100827 / IM2).